The following is a 581-amino-acid chain: Meiotic PUF family protein 1 (581 aa).

The PUM-HD domain occupies 225 to 580 (FPNGTTEPFE…RIAALVEKSK (356 aa)). Pumilio repeat units follow at residues 291-326 (TILPFSVTLMKNKFGNFLIQKCFEYSTEAQLQSFSY), 327-362 (FLKKHVKELSIDAFGSHVLQKSLEIYPERFTNNLIE), 363-398 (ELIECLPATLMQRHSCHVWQKFFETRRKSLVDGIFD), 403-438 (KMQGKWLQVSVSEMGSLVVQTIFENCKEKDKRTCLD), 439-474 (EIINNMDQIICGQWGNWVIQHIIEHGSEPDKQRILN), 475-510 (SLLKEVESYSTNRYASKVVERALRVCHVTFFDRYVK), 518-554 (ELPTIFLQEIASNQYGNYIVQYLLQVATPSQINLMAE), and 555-581 (HLKKHMVSLRGHKYGQRIAALVEKSKS).

In terms of biological role, RNA-binding protein essential for meiotic progression. In Schizosaccharomyces pombe (strain 972 / ATCC 24843) (Fission yeast), this protein is Meiotic PUF family protein 1 (mpf1).